The following is an 85-amino-acid chain: MKAGIHPAYRPVLFHDTAADVYFLIGSTVDTDRTQVHSDGQTYPYVALDVSSASHPVYTGQQRKTTVEGRVAGFNKRFAGFQATR.

Belongs to the bacterial ribosomal protein bL31 family. Type B subfamily. In terms of assembly, part of the 50S ribosomal subunit.

This chain is Large ribosomal subunit protein bL31B, found in Pseudomonas entomophila (strain L48).